The primary structure comprises 929 residues: Bifunctional uridylyltransferase/uridylyl-removing enzyme (929 aa).

Residues 1 to 379 (MSPSRPAADE…RPAAKRRRVP (379 aa)) are uridylyltransferase. The segment at 380-735 (ESDDFVIDNN…VGFDEARAVT (356 aa)) is uridylyl-removing. The 124-residue stretch at 495–618 (VDEHLIRCVG…VETVEQMKML (124 aa)) folds into the HD domain. 2 ACT domains span residues 736 to 818 (ELTI…AVAR) and 849 to 929 (VIEV…KPAA).

The protein belongs to the GlnD family. Mg(2+) is required as a cofactor.

It carries out the reaction [protein-PII]-L-tyrosine + UTP = [protein-PII]-uridylyl-L-tyrosine + diphosphate. It catalyses the reaction [protein-PII]-uridylyl-L-tyrosine + H2O = [protein-PII]-L-tyrosine + UMP + H(+). Uridylyltransferase (UTase) activity is inhibited by glutamine, while glutamine activates uridylyl-removing (UR) activity. Its function is as follows. Modifies, by uridylylation and deuridylylation, the PII regulatory proteins (GlnB and homologs), in response to the nitrogen status of the cell that GlnD senses through the glutamine level. Under low glutamine levels, catalyzes the conversion of the PII proteins and UTP to PII-UMP and PPi, while under higher glutamine levels, GlnD hydrolyzes PII-UMP to PII and UMP (deuridylylation). Thus, controls uridylylation state and activity of the PII proteins, and plays an important role in the regulation of nitrogen fixation and metabolism. The protein is Bifunctional uridylyltransferase/uridylyl-removing enzyme of Rhodopseudomonas palustris (strain ATCC BAA-98 / CGA009).